Reading from the N-terminus, the 217-residue chain is Ribosome maturation factor RimM (217 aa).

The 72-residue stretch at 115 to 186 (EDAWYDNQLV…TVTLTPPPGL (72 aa)) folds into the PRC barrel domain. Residues 181–217 (TPPPGLFEDLPDDAPAAGDESEPVSPPVTAEETPGGE) are disordered.

This sequence belongs to the RimM family. In terms of assembly, binds ribosomal protein uS19.

It is found in the cytoplasm. Its function is as follows. An accessory protein needed during the final step in the assembly of 30S ribosomal subunit, possibly for assembly of the head region. Essential for efficient processing of 16S rRNA. May be needed both before and after RbfA during the maturation of 16S rRNA. It has affinity for free ribosomal 30S subunits but not for 70S ribosomes. The protein is Ribosome maturation factor RimM of Leifsonia xyli subsp. xyli (strain CTCB07).